The primary structure comprises 121 residues: Large ribosomal subunit protein bL20 (121 aa).

The protein belongs to the bacterial ribosomal protein bL20 family.

Binds directly to 23S ribosomal RNA and is necessary for the in vitro assembly process of the 50S ribosomal subunit. It is not involved in the protein synthesizing functions of that subunit. In Orientia tsutsugamushi (strain Ikeda) (Rickettsia tsutsugamushi), this protein is Large ribosomal subunit protein bL20.